The sequence spans 356 residues: Phosphoserine aminotransferase (356 aa).

Arg41 contacts L-glutamate. Pyridoxal 5'-phosphate-binding positions include 75-76 (AT), Trp100, Thr147, Asp166, and Gln189. At Lys190 the chain carries N6-(pyridoxal phosphate)lysine. Position 227–228 (227–228 (NT)) interacts with pyridoxal 5'-phosphate.

The protein belongs to the class-V pyridoxal-phosphate-dependent aminotransferase family. SerC subfamily. In terms of assembly, homodimer. Pyridoxal 5'-phosphate is required as a cofactor.

Its subcellular location is the cytoplasm. It catalyses the reaction O-phospho-L-serine + 2-oxoglutarate = 3-phosphooxypyruvate + L-glutamate. The enzyme catalyses 4-(phosphooxy)-L-threonine + 2-oxoglutarate = (R)-3-hydroxy-2-oxo-4-phosphooxybutanoate + L-glutamate. It functions in the pathway amino-acid biosynthesis; L-serine biosynthesis; L-serine from 3-phospho-D-glycerate: step 2/3. Catalyzes the reversible conversion of 3-phosphohydroxypyruvate to phosphoserine and of 3-hydroxy-2-oxo-4-phosphonooxybutanoate to phosphohydroxythreonine. This is Phosphoserine aminotransferase from Exiguobacterium sp. (strain ATCC BAA-1283 / AT1b).